Consider the following 340-residue polypeptide: Uroporphyrinogen decarboxylase (340 aa).

Substrate-binding positions include 23–27 (RQAGR), D72, Y147, T202, and H316.

Belongs to the uroporphyrinogen decarboxylase family. In terms of assembly, homodimer.

The protein resides in the cytoplasm. The catalysed reaction is uroporphyrinogen III + 4 H(+) = coproporphyrinogen III + 4 CO2. The protein operates within porphyrin-containing compound metabolism; protoporphyrin-IX biosynthesis; coproporphyrinogen-III from 5-aminolevulinate: step 4/4. Its function is as follows. Catalyzes the decarboxylation of four acetate groups of uroporphyrinogen-III to yield coproporphyrinogen-III. This is Uroporphyrinogen decarboxylase from Pelobacter propionicus (strain DSM 2379 / NBRC 103807 / OttBd1).